Here is a 263-residue protein sequence, read N- to C-terminus: Ribonuclease HII (263 aa).

The RNase H type-2 domain occupies 39 to 257 (AFFTGIDEAG…VKPAAAPHAA (219 aa)). 3 residues coordinate a divalent metal cation: aspartate 45, glutamate 46, and aspartate 157.

Belongs to the RNase HII family. Mn(2+) serves as cofactor. It depends on Mg(2+) as a cofactor.

Its subcellular location is the cytoplasm. It catalyses the reaction Endonucleolytic cleavage to 5'-phosphomonoester.. Its function is as follows. Endonuclease that specifically degrades the RNA of RNA-DNA hybrids. The sequence is that of Ribonuclease HII from Oleidesulfovibrio alaskensis (strain ATCC BAA-1058 / DSM 17464 / G20) (Desulfovibrio alaskensis).